A 44-amino-acid polypeptide reads, in one-letter code: Photosystem I reaction center subunit IX (44 aa).

A helical transmembrane segment spans residues 7 to 27 (YLSVAPVLTTLWFGSLAGLLI).

Belongs to the PsaJ family.

It is found in the plastid. The protein localises to the chloroplast thylakoid membrane. Functionally, may help in the organization of the PsaE and PsaF subunits. The protein is Photosystem I reaction center subunit IX of Nymphaea alba (White water-lily).